The sequence spans 532 residues: Glutamate--cysteine ligase (532 aa).

Belongs to the glutamate--cysteine ligase type 1 family. Type 1 subfamily.

The catalysed reaction is L-cysteine + L-glutamate + ATP = gamma-L-glutamyl-L-cysteine + ADP + phosphate + H(+). It functions in the pathway sulfur metabolism; glutathione biosynthesis; glutathione from L-cysteine and L-glutamate: step 1/2. The protein is Glutamate--cysteine ligase of Pseudomonas fluorescens (strain ATCC BAA-477 / NRRL B-23932 / Pf-5).